We begin with the raw amino-acid sequence, 210 residues long: Leucyl/phenylalanyl-tRNA--protein transferase (210 aa).

It belongs to the L/F-transferase family.

It localises to the cytoplasm. It catalyses the reaction N-terminal L-lysyl-[protein] + L-leucyl-tRNA(Leu) = N-terminal L-leucyl-L-lysyl-[protein] + tRNA(Leu) + H(+). It carries out the reaction N-terminal L-arginyl-[protein] + L-leucyl-tRNA(Leu) = N-terminal L-leucyl-L-arginyl-[protein] + tRNA(Leu) + H(+). The enzyme catalyses L-phenylalanyl-tRNA(Phe) + an N-terminal L-alpha-aminoacyl-[protein] = an N-terminal L-phenylalanyl-L-alpha-aminoacyl-[protein] + tRNA(Phe). In terms of biological role, functions in the N-end rule pathway of protein degradation where it conjugates Leu, Phe and, less efficiently, Met from aminoacyl-tRNAs to the N-termini of proteins containing an N-terminal arginine or lysine. The polypeptide is Leucyl/phenylalanyl-tRNA--protein transferase (Roseobacter denitrificans (strain ATCC 33942 / OCh 114) (Erythrobacter sp. (strain OCh 114))).